A 556-amino-acid chain; its full sequence is 2-succinyl-5-enolpyruvyl-6-hydroxy-3-cyclohexene-1-carboxylate synthase (556 aa).

This sequence belongs to the TPP enzyme family. MenD subfamily. In terms of assembly, homodimer. Mg(2+) is required as a cofactor. Requires Mn(2+) as cofactor. The cofactor is thiamine diphosphate.

The enzyme catalyses isochorismate + 2-oxoglutarate + H(+) = 5-enolpyruvoyl-6-hydroxy-2-succinyl-cyclohex-3-ene-1-carboxylate + CO2. The protein operates within quinol/quinone metabolism; 1,4-dihydroxy-2-naphthoate biosynthesis; 1,4-dihydroxy-2-naphthoate from chorismate: step 2/7. Its pathway is quinol/quinone metabolism; menaquinone biosynthesis. Its function is as follows. Catalyzes the thiamine diphosphate-dependent decarboxylation of 2-oxoglutarate and the subsequent addition of the resulting succinic semialdehyde-thiamine pyrophosphate anion to isochorismate to yield 2-succinyl-5-enolpyruvyl-6-hydroxy-3-cyclohexene-1-carboxylate (SEPHCHC). This Escherichia coli (strain ATCC 8739 / DSM 1576 / NBRC 3972 / NCIMB 8545 / WDCM 00012 / Crooks) protein is 2-succinyl-5-enolpyruvyl-6-hydroxy-3-cyclohexene-1-carboxylate synthase.